The sequence spans 529 residues: ATP synthase F(1) complex subunit beta, mitochondrial (529 aa).

The N-terminal 47 residues, 1 to 47 (MLGFVGRVAAAPASGALRRLTPSASLPPAQLLLRAAPTAVHPVRDYA), are a transit peptide targeting the mitochondrion. S106 carries an O-linked (GlcNAc) serine glycan. Residues K124, K133, and K161 each carry the N6-acetyllysine; alternate modification. An N6-succinyllysine; alternate mark is found at K124, K133, and K161. K198 bears the N6-acetyllysine mark. Positions 209, 210, 211, 212, 213, and 214 each coordinate ADP. Residue G209 coordinates ATP. G209, V210, G211, K212, and T213 together coordinate phosphate. Positions 211, 212, 213, and 214 each coordinate ATP. Position 213 (T213) interacts with Mg(2+). E238 contacts Mg(2+). Position 239 (R239) interacts with ATP. An N6-acetyllysine; alternate mark is found at K259 and K264. K259 and K264 each carry N6-succinyllysine; alternate. Phosphothreonine is present on T312. Position 415 is a phosphoserine (S415). An N6-acetyllysine modification is found at K426. S433 carries the phosphoserine modification. K480 and K485 each carry N6-acetyllysine. K522 bears the N6-acetyllysine; alternate mark. Residue K522 is modified to N6-succinyllysine; alternate. Position 529 is a phosphoserine (S529).

This sequence belongs to the ATPase alpha/beta chains family. As to quaternary structure, homotrimer. Component of the ATP synthase complex composed at least of ATP5F1A/subunit alpha, ATP5F1B/subunit beta, ATP5MC1/subunit c (homooctomer), MT-ATP6/subunit a, MT-ATP8/subunit 8, ATP5ME/subunit e, ATP5MF/subunit f, ATP5MG/subunit g, ATP5MK/subunit k, ATP5MJ/subunit j, ATP5F1C/subunit gamma, ATP5F1D/subunit delta, ATP5F1E/subunit epsilon, ATP5PF/subunit F6, ATP5PB/subunit b, ATP5PD/subunit d, ATP5PO/subunit OSCP. ATP synthase complex consists of a soluble F(1) head domain (subunits alpha(3) and beta(3)) - the catalytic core - and a membrane F(0) domain - the membrane proton channel (subunits c, a, 8, e, f, g, k and j). These two domains are linked by a central stalk (subunits gamma, delta, and epsilon) rotating inside the F1 region and a stationary peripheral stalk (subunits F6, b, d, and OSCP). Interacts with PPIF. Interacts with BCL2L1 isoform BCL-X(L); the interaction mediates the association of BCL2L1 isoform BCL-X(L) with the mitochondrial membrane F(1)F(0) ATP synthase and enhances neurons metabolic efficiency. Interacts with CLN5 and PPT1. Interacts with S100A1; this interaction increases F1-ATPase activity. Interacts with MTLN. Interacts with TTC5/STRAP; the interaction results in decreased mitochondrial ATP production. Requires Mg(2+) as cofactor.

It localises to the mitochondrion inner membrane. The enzyme catalyses ATP + H2O + 4 H(+)(in) = ADP + phosphate + 5 H(+)(out). Catalytic subunit beta, of the mitochondrial membrane ATP synthase complex (F(1)F(0) ATP synthase or Complex V) that produces ATP from ADP in the presence of a proton gradient across the membrane which is generated by electron transport complexes of the respiratory chain. ATP synthase complex consist of a soluble F(1) head domain - the catalytic core - and a membrane F(1) domain - the membrane proton channel. These two domains are linked by a central stalk rotating inside the F(1) region and a stationary peripheral stalk. During catalysis, ATP synthesis in the catalytic domain of F(1) is coupled via a rotary mechanism of the central stalk subunits to proton translocation. In vivo, can only synthesize ATP although its ATP hydrolase activity can be activated artificially in vitro. With the subunit alpha (ATP5F1A), forms the catalytic core in the F(1) domain. The polypeptide is ATP synthase F(1) complex subunit beta, mitochondrial (Homo sapiens (Human)).